A 519-amino-acid polypeptide reads, in one-letter code: Pleckstrin homology domain-containing family A member 8 (519 aa).

The PH domain occupies 1-93 (MEGVLYKWTN…WLVALGSAKA (93 aa)). Phosphothreonine is present on threonine 139. At serine 145 the chain carries Phosphoserine. Threonine 153 is modified (phosphothreonine). A disordered region spans residues 275–302 (GEENLESHDKDPAQPGSDSVCSPESPWE). Residues 330-473 (IPTEAFLASC…EDFVAALTIK (144 aa)) form a glycolipid transfer protein homology domain region.

As to quaternary structure, homodimer. Interacts with ARF1; the interaction together with phosphatidylinositol 4-phosphate binding is required for FAPP2 GlcCer transfer ability.

It localises to the golgi apparatus. Its subcellular location is the trans-Golgi network membrane. It is found in the membrane. Cargo transport protein that is required for apical transport from the trans-Golgi network (TGN). Transports AQP2 from the trans-Golgi network (TGN) to sites of AQP2 phosphorylation. Mediates the non-vesicular transport of glucosylceramide (GlcCer) from the trans-Golgi network (TGN) to the plasma membrane and plays a pivotal role in the synthesis of complex glycosphingolipids. Binding of both phosphatidylinositol 4-phosphate (PIP) and ARF1 are essential for the GlcCer transfer ability. Also required for primary cilium formation, possibly by being involved in the transport of raft lipids to the apical membrane, and for membrane tubulation. This is Pleckstrin homology domain-containing family A member 8 (Plekha8) from Mus musculus (Mouse).